Reading from the N-terminus, the 213-residue chain is MAESTPKLSLLETRILGTLVEKQRTVPDTYPLSVNALMAGCNQKTSRNPVIETSEAEIVHALDSLKDLGLVREVSGSRVSRFEHLFEKALGVPTQASALLTVLMLRGPQTAGELRLNCERLHRFADISSVEAFLEELAAKEDGALVVELPRLPGSRENRWMHLLSGEPMIEAGAAGRSPSTGMQDIEELRARVSSLEAEVAELRALLLERSRE.

The protein belongs to the UPF0502 family.

This Dechloromonas aromatica (strain RCB) protein is UPF0502 protein Daro_2469.